An 867-amino-acid polypeptide reads, in one-letter code: Zinc finger protein zfp-1 (867 aa).

A PHD-type 1 zinc finger spans residues 5 to 57 (VGGCCVCADENGWTDNPLIYCDGENCEVAVHQGCYGIQEVPEGEWFCAKCTKA). Residues 69 to 102 (TFCCQLCPFDYGALKKTDRNGWAHVICALYIPEV) form a C2HC pre-PHD-type 2 zinc finger. The interval 69 to 186 (TFCCQLCPFD…KYCGYCENHL (118 aa)) is extended PHD2 domain (ePHD2). The PHD-type 2 zinc finger occupies 125–186 (KLCYICNEER…KYCGYCENHL (62 aa)). Disordered regions lie at residues 267-311 (GSTV…SLSS), 440-477 (KNDM…GKSP), 503-586 (ADRT…QSNR), and 753-773 (SSGA…STAG). Positions 285-311 (PLTTSSRSSVAQDPSPPLTINKNSLSS) are enriched in polar residues. Positions 503 to 512 (ADRTAAERRA) are enriched in basic and acidic residues. The span at 516–527 (QSQPSTSTNGGP) shows a compositional bias: polar residues. Positions 538–550 (HTNSTNSTNHQNN) are enriched in low complexity. A compositionally biased stretch (polar residues) spans 551–573 (GLTQNAPASTSMQAGTSSNDGVI). A compositionally biased stretch (low complexity) spans 574 to 585 (SQNGTSSTSQSN). A compositionally biased stretch (polar residues) spans 758–771 (VNSNIQNHRATPST).

As to quaternary structure, multimer; in vitro. Interacts (via C-terminus) with dot-1.1 to form a heterodimer known as the zfp-1-dot-1.1 complex or DotCom complex. In terms of tissue distribution, isoform a: Expressed at high levels in maturing oocytes, but at low levels in the rest of the germ line (at protein level). Isoform a: Not expressed in the pharynx, germ line and tail. Isoform c: Not expressed in the germ line (at protein level). Isoform c: Uniformly expressed.

It localises to the nucleus. The protein resides in the chromosome. Functionally, recruits the histone methyltransferase dot-1.1 to chromatin to methylate 'Lys-79' of histone H3 and activate transcription. Recognizes and binds histone H3 methylated at 'Lys-4' (H3K4me) at the promoters of target genes. During stress, the zfp-1-dot-1.1 complex also plays a role in the deubiquitination of histone H2B sites, which negatively modulates the RNA polymerase II-induced transcription of highly expressed genes. In response to stress, binds to the pdk-1 promoter to negatively regulate pdk-1 expression, which negatively modulates daf-16/FOXO-mediated gene expression. Thus, most likely via this mechanism, in response to stress, it confers a protective role against neuronal necrosis. Plays a role in Insulin/IGF-1-like signaling (IIS)- and diet restriction-mediated lifespan extension by controlling daf-16/FOXO and pha-4/FOXA recruitment to target promoters. May negatively regulate the expression of genes required for vulval development. May play a role in axon guidance in D-type motor neurons. May suppress sensitivity to RNAi. Its function is as follows. Required for migration of HSN motor neurons during embryogenesis. This chain is Zinc finger protein zfp-1, found in Caenorhabditis elegans.